The primary structure comprises 197 residues: Large ribosomal subunit protein bL9 (197 aa).

Residues 178 to 197 form a disordered region; sequence GEFFDPEAQEDEAAAGETAQ. Residues 181–191 show a composition bias toward acidic residues; sequence FDPEAQEDEAA.

It belongs to the bacterial ribosomal protein bL9 family.

Its function is as follows. Binds to the 23S rRNA. The polypeptide is Large ribosomal subunit protein bL9 (Bradyrhizobium sp. (strain BTAi1 / ATCC BAA-1182)).